The primary structure comprises 647 residues: CRE-binding bZIP protein SKO1 (647 aa).

4 disordered regions span residues 1–119 (MSSE…GSKR), 135–204 (STTN…QMPG), 305–331 (TPTTNTTDGTVNNSISNSNFSPNTSTK), and 353–429 (KENE…EEQE). The segment covering 51-85 (RNNSTSTITQHSQRSTHSLNSIPEENGNSTVTDNS) has biased composition (polar residues). Residue Ser94 is modified to Phosphoserine. Thr113 carries the phosphothreonine modification. 2 stretches are compositionally biased toward low complexity: residues 138–194 (NPSQ…SGNG) and 305–329 (TPTTNTTDGTVNNSISNSNFSPNTS). Composition is skewed to polar residues over residues 357-368 (NLTTQIENNDQF) and 396-405 (RKNSAVTTAP). Ser399 is subject to Phosphoserine. Positions 429 to 492 (ERKRKEFLER…PSSSSNSQFN (64 aa)) constitute a bZIP domain. The segment at 430–451 (RKRKEFLERNRVAASKFRKRKK) is basic motif. Residues 454 to 461 (IKKIENDL) are leucine-zipper. At Ser558 the chain carries Phosphoserine.

Belongs to the bZIP family.

It localises to the nucleus. In terms of biological role, binds to the CRE motif 5'-TGACGTCA-3' and acts as a repressor of transcription of the SUC2 gene and most probably other genes. This chain is CRE-binding bZIP protein SKO1 (SKO1), found in Saccharomyces cerevisiae (strain ATCC 204508 / S288c) (Baker's yeast).